The chain runs to 271 residues: Phosphate import ATP-binding protein PstB 1 (271 aa).

The region spanning 25–266 (LTVEHLNLYY…PTQRRTEDYI (242 aa)) is the ABC transporter domain. Residue 57-64 (GPSGCGKS) coordinates ATP.

It belongs to the ABC transporter superfamily. Phosphate importer (TC 3.A.1.7) family. In terms of assembly, the complex is composed of two ATP-binding proteins (PstB), two transmembrane proteins (PstC and PstA) and a solute-binding protein (PstS).

Its subcellular location is the cell inner membrane. It carries out the reaction phosphate(out) + ATP + H2O = ADP + 2 phosphate(in) + H(+). Part of the ABC transporter complex PstSACB involved in phosphate import. Responsible for energy coupling to the transport system. The sequence is that of Phosphate import ATP-binding protein PstB 1 from Pectobacterium atrosepticum (strain SCRI 1043 / ATCC BAA-672) (Erwinia carotovora subsp. atroseptica).